A 220-amino-acid chain; its full sequence is Ribosomal RNA large subunit methyltransferase E (220 aa).

S-adenosyl-L-methionine contacts are provided by Gly-60, Trp-62, Asp-92, Asp-108, and Asp-133. Lys-173 acts as the Proton acceptor in catalysis. Residues 197–220 (RKPKASRDKSSETFILGRQLKQPR) form a disordered region.

This sequence belongs to the class I-like SAM-binding methyltransferase superfamily. RNA methyltransferase RlmE family.

It is found in the cytoplasm. The catalysed reaction is uridine(2552) in 23S rRNA + S-adenosyl-L-methionine = 2'-O-methyluridine(2552) in 23S rRNA + S-adenosyl-L-homocysteine + H(+). Functionally, specifically methylates the uridine in position 2552 of 23S rRNA at the 2'-O position of the ribose in the fully assembled 50S ribosomal subunit. This chain is Ribosomal RNA large subunit methyltransferase E, found in Burkholderia ambifaria (strain ATCC BAA-244 / DSM 16087 / CCUG 44356 / LMG 19182 / AMMD) (Burkholderia cepacia (strain AMMD)).